Reading from the N-terminus, the 191-residue chain is Guanylate kinase (191 aa).

The Guanylate kinase-like domain maps to 9 to 187 (GQLIVITGPS…SLIALETAIF (179 aa)). An ATP-binding site is contributed by 16-23 (GPSGVGKG).

This sequence belongs to the guanylate kinase family.

It localises to the cytoplasm. It catalyses the reaction GMP + ATP = GDP + ADP. Essential for recycling GMP and indirectly, cGMP. In Thermosynechococcus vestitus (strain NIES-2133 / IAM M-273 / BP-1), this protein is Guanylate kinase.